The chain runs to 218 residues: Small ribosomal subunit protein uS3c (218 aa).

In terms of domain architecture, KH type-2 spans 47-120 (VRTHIKSSSN…KLHIAIEKVA (74 aa)).

This sequence belongs to the universal ribosomal protein uS3 family. In terms of assembly, part of the 30S ribosomal subunit.

The protein resides in the plastid. The protein localises to the chloroplast. This Picea abies (Norway spruce) protein is Small ribosomal subunit protein uS3c (rps3).